The chain runs to 207 residues: Transcription antitermination protein NusB (207 aa).

Belongs to the NusB family.

Involved in transcription antitermination. Required for transcription of ribosomal RNA (rRNA) genes. Binds specifically to the boxA antiterminator sequence of the ribosomal RNA (rrn) operons. The sequence is that of Transcription antitermination protein NusB from Trichodesmium erythraeum (strain IMS101).